The sequence spans 1215 residues: Pesticidal crystal protein Cry1Ka (1215 aa).

Belongs to the delta endotoxin family.

Functionally, promotes colloidosmotic lysis by binding to the midgut epithelial cells of insects. Selectively toxic to Artogeia rapae but not active on Plutella xylostella. The protein is Pesticidal crystal protein Cry1Ka (cry1Ka) of Bacillus thuringiensis subsp. morrisoni.